A 316-amino-acid polypeptide reads, in one-letter code: Ribosomal RNA small subunit methyltransferase H (316 aa).

S-adenosyl-L-methionine contacts are provided by residues 42-44, D62, F86, D104, and Q111; that span reads GGH.

The protein belongs to the methyltransferase superfamily. RsmH family.

Its subcellular location is the cytoplasm. The catalysed reaction is cytidine(1402) in 16S rRNA + S-adenosyl-L-methionine = N(4)-methylcytidine(1402) in 16S rRNA + S-adenosyl-L-homocysteine + H(+). In terms of biological role, specifically methylates the N4 position of cytidine in position 1402 (C1402) of 16S rRNA. The chain is Ribosomal RNA small subunit methyltransferase H from Polynucleobacter necessarius subsp. necessarius (strain STIR1).